The sequence spans 261 residues: tRNA pseudouridine synthase A (261 aa).

Aspartate 51 functions as the Nucleophile in the catalytic mechanism. A substrate-binding site is contributed by tyrosine 109.

It belongs to the tRNA pseudouridine synthase TruA family. In terms of assembly, homodimer.

It carries out the reaction uridine(38/39/40) in tRNA = pseudouridine(38/39/40) in tRNA. Formation of pseudouridine at positions 38, 39 and 40 in the anticodon stem and loop of transfer RNAs. This chain is tRNA pseudouridine synthase A, found in Shewanella sp. (strain W3-18-1).